We begin with the raw amino-acid sequence, 329 residues long: Interleukin-12 subunit beta (329 aa).

Positions 1–22 are cleaved as a signal peptide; the sequence is MHPQQLVIAWLSLVLLAPPLMA. One can recognise an Ig-like C2-type domain in the interval 23-106; the sequence is IWELEKNVYV…LSHSFLLIHK (84 aa). A disulfide bridge links Cys-50 with Cys-90. N-linked (GlcNAc...) asparagine glycans are attached at residues Asn-135 and Asn-223. One can recognise a Fibronectin type-III domain in the interval 238 to 329; it reads PPKNLQLKPL…WSNWASVSCS (92 aa).

Belongs to the IL-12B family. In terms of assembly, heterodimer with IL12A; disulfide-linked. The heterodimer is known as interleukin IL-12. Heterodimer with IL23A; disulfide-linked. The heterodimer is known as interleukin IL-23. Also secreted as a monomer. Interacts with NBR1; this interaction promotes IL-12 secretion.

Its subcellular location is the secreted. Its function is as follows. Cytokine that can act as a growth factor for activated T and NK cells, enhance the lytic activity of NK/lymphokine-activated killer cells, and stimulate the production of IFN-gamma by resting PBMC. Functionally, associates with IL23A to form the IL-23 interleukin, a heterodimeric cytokine which functions in innate and adaptive immunity. IL-23 may constitute with IL-17 an acute response to infection in peripheral tissues. IL-23 binds to a heterodimeric receptor complex composed of IL12RB1 and IL23R, activates the Jak-Stat signaling cascade, stimulates memory rather than naive T-cells and promotes production of pro-inflammatory cytokines. IL-23 induces autoimmune inflammation and thus may be responsible for autoimmune inflammatory diseases and may be important for tumorigenesis. The protein is Interleukin-12 subunit beta (IL12B) of Felis catus (Cat).